Reading from the N-terminus, the 206-residue chain is N-(5'-phosphoribosyl)anthranilate isomerase (206 aa).

Belongs to the TrpF family.

The enzyme catalyses N-(5-phospho-beta-D-ribosyl)anthranilate = 1-(2-carboxyphenylamino)-1-deoxy-D-ribulose 5-phosphate. Its pathway is amino-acid biosynthesis; L-tryptophan biosynthesis; L-tryptophan from chorismate: step 3/5. In Pseudomonas savastanoi pv. phaseolicola (strain 1448A / Race 6) (Pseudomonas syringae pv. phaseolicola (strain 1448A / Race 6)), this protein is N-(5'-phosphoribosyl)anthranilate isomerase.